Here is a 209-residue protein sequence, read N- to C-terminus: ATP-dependent Clp protease proteolytic subunit 2 (209 aa).

S106 acts as the Nucleophile in catalysis. Residue H131 is part of the active site.

This sequence belongs to the peptidase S14 family. In terms of assembly, fourteen ClpP subunits assemble into 2 heptameric rings which stack back to back to give a disk-like structure with a central cavity, resembling the structure of eukaryotic proteasomes.

The protein localises to the cytoplasm. It catalyses the reaction Hydrolysis of proteins to small peptides in the presence of ATP and magnesium. alpha-casein is the usual test substrate. In the absence of ATP, only oligopeptides shorter than five residues are hydrolyzed (such as succinyl-Leu-Tyr-|-NHMec, and Leu-Tyr-Leu-|-Tyr-Trp, in which cleavage of the -Tyr-|-Leu- and -Tyr-|-Trp bonds also occurs).. Cleaves peptides in various proteins in a process that requires ATP hydrolysis. Has a chymotrypsin-like activity. Plays a major role in the degradation of misfolded proteins. The sequence is that of ATP-dependent Clp protease proteolytic subunit 2 from Rhizobium etli (strain ATCC 51251 / DSM 11541 / JCM 21823 / NBRC 15573 / CFN 42).